The sequence spans 84 residues: Delta-thalatoxin-Hhe1a (84 aa).

The signal sequence occupies residues 1-19 (MAYQKIVFVALMLVLAVSA). A propeptide spanning residues 20-33 (MRLPDQQDQDISVA) is cleaved from the precursor. 3 cysteine pairs are disulfide-bonded: Cys-38/Cys-78, Cys-40/Cys-68, and Cys-61/Cys-79.

It belongs to the sea anemone sodium channel inhibitory toxin family. Type II subfamily.

The protein resides in the secreted. The protein localises to the nematocyst. Binds specifically to the voltage-gated sodium channel (Nav) and delays its inactivation. The chain is Delta-thalatoxin-Hhe1a from Heterodactyla hemprichii (Hemprich's sea anemone).